Reading from the N-terminus, the 558-residue chain is Membrane protein insertase YidC (558 aa).

The next 5 helical transmembrane spans lie at isoleucine 3–tryptophan 23, phenylalanine 364–phenylalanine 384, leucine 438–valine 458, proline 477–proline 497, and methionine 508–leucine 528.

It belongs to the OXA1/ALB3/YidC family. Type 1 subfamily. As to quaternary structure, interacts with the Sec translocase complex via SecD. Specifically interacts with transmembrane segments of nascent integral membrane proteins during membrane integration.

It is found in the cell inner membrane. Its function is as follows. Required for the insertion and/or proper folding and/or complex formation of integral membrane proteins into the membrane. Involved in integration of membrane proteins that insert both dependently and independently of the Sec translocase complex, as well as at least some lipoproteins. Aids folding of multispanning membrane proteins. The chain is Membrane protein insertase YidC from Burkholderia pseudomallei (strain K96243).